We begin with the raw amino-acid sequence, 331 residues long: Anthranilate phosphoribosyltransferase (331 aa).

5-phospho-alpha-D-ribose 1-diphosphate contacts are provided by residues G79, 82 to 83 (GD), T87, 89 to 92 (NVST), 107 to 115 (KHGNYGVSS), and S119. G79 contributes to the anthranilate binding site. S91 serves as a coordination point for Mg(2+). An anthranilate-binding site is contributed by N110. Anthranilate is bound at residue R165. The Mg(2+) site is built by D223 and E224.

The protein belongs to the anthranilate phosphoribosyltransferase family. In terms of assembly, homodimer. Mg(2+) serves as cofactor.

The catalysed reaction is N-(5-phospho-beta-D-ribosyl)anthranilate + diphosphate = 5-phospho-alpha-D-ribose 1-diphosphate + anthranilate. Its pathway is amino-acid biosynthesis; L-tryptophan biosynthesis; L-tryptophan from chorismate: step 2/5. Functionally, catalyzes the transfer of the phosphoribosyl group of 5-phosphorylribose-1-pyrophosphate (PRPP) to anthranilate to yield N-(5'-phosphoribosyl)-anthranilate (PRA). The sequence is that of Anthranilate phosphoribosyltransferase from Christiangramia forsetii (strain DSM 17595 / CGMCC 1.15422 / KT0803) (Gramella forsetii).